A 476-amino-acid chain; its full sequence is Glycogen synthase (476 aa).

Lysine 15 is an ADP-alpha-D-glucose binding site.

The protein belongs to the glycosyltransferase 1 family. Bacterial/plant glycogen synthase subfamily.

It carries out the reaction [(1-&gt;4)-alpha-D-glucosyl](n) + ADP-alpha-D-glucose = [(1-&gt;4)-alpha-D-glucosyl](n+1) + ADP + H(+). It functions in the pathway glycan biosynthesis; glycogen biosynthesis. In terms of biological role, synthesizes alpha-1,4-glucan chains using ADP-glucose. The chain is Glycogen synthase from Leptospira biflexa serovar Patoc (strain Patoc 1 / Ames).